A 586-amino-acid chain; its full sequence is Proteasome-associated ATPase (586 aa).

Residues 11-76 (AWRELEAVRA…LREEVDRLGQ (66 aa)) are a coiled coil. 273–278 (GCGKTL) contacts ATP. Positions 585 to 586 (YL) are docks into pockets in the proteasome alpha-ring.

This sequence belongs to the AAA ATPase family. In terms of assembly, homohexamer. Assembles into a hexameric ring structure that caps the 20S proteasome core. Strongly interacts with the prokaryotic ubiquitin-like protein Pup through a hydrophobic interface; the interacting region of ARC lies in its N-terminal coiled-coil domain. There is one Pup binding site per ARC hexamer ring. Upon ATP-binding, the C-terminus of ARC interacts with the alpha-rings of the proteasome core, possibly by binding to the intersubunit pockets.

The protein operates within protein degradation; proteasomal Pup-dependent pathway. Its function is as follows. ATPase which is responsible for recognizing, binding, unfolding and translocation of pupylated proteins into the bacterial 20S proteasome core particle. May be essential for opening the gate of the 20S proteasome via an interaction with its C-terminus, thereby allowing substrate entry and access to the site of proteolysis. Thus, the C-termini of the proteasomal ATPase may function like a 'key in a lock' to induce gate opening and therefore regulate proteolysis. The polypeptide is Proteasome-associated ATPase (Nocardia farcinica (strain IFM 10152)).